Here is a 284-residue protein sequence, read N- to C-terminus: uncharacterized protein (284 aa).

Residues 1–8 (MLWKVSKM) lie on the Cytoplasmic side of the membrane. Residues 9 to 25 (FLGGLVALTTISVATLY) traverse the membrane as a helical segment. The Extracellular segment spans residues 26-80 (HYQNRLVYPSWAQGARNHVDTPDSRGIPYEKLTLITQDHIKLEAWDIKNENSTST). The chain crosses the membrane as a helical span at residues 81-101 (VLILCPNAGNIGYFILIIDIF). Residues 102-284 (YRQFGMSVFI…RDFLIEKGFI (183 aa)) are Cytoplasmic-facing.

To S.pombe bem46 and M.tuberculosis Rv2307c.

The protein resides in the mitochondrion membrane. This is an uncharacterized protein from Saccharomyces cerevisiae (strain ATCC 204508 / S288c) (Baker's yeast).